The sequence spans 333 residues: Ketol-acid reductoisomerase (NADP(+)) (333 aa).

The 179-residue stretch at Met-1–Thr-179 folds into the KARI N-terminal Rossmann domain. NADP(+)-binding positions include Tyr-22–Gln-25, Ser-48, Ser-50, and Asp-80–Gln-83. His-105 is a catalytic residue. Gly-131 is a binding site for NADP(+). The KARI C-terminal knotted domain maps to Thr-180–Val-325. Mg(2+)-binding residues include Asp-188, Glu-192, Glu-224, and Glu-228. Ser-249 serves as a coordination point for substrate.

It belongs to the ketol-acid reductoisomerase family. Mg(2+) serves as cofactor.

The enzyme catalyses (2R)-2,3-dihydroxy-3-methylbutanoate + NADP(+) = (2S)-2-acetolactate + NADPH + H(+). It catalyses the reaction (2R,3R)-2,3-dihydroxy-3-methylpentanoate + NADP(+) = (S)-2-ethyl-2-hydroxy-3-oxobutanoate + NADPH + H(+). The protein operates within amino-acid biosynthesis; L-isoleucine biosynthesis; L-isoleucine from 2-oxobutanoate: step 2/4. Its pathway is amino-acid biosynthesis; L-valine biosynthesis; L-valine from pyruvate: step 2/4. In terms of biological role, involved in the biosynthesis of branched-chain amino acids (BCAA). Catalyzes an alkyl-migration followed by a ketol-acid reduction of (S)-2-acetolactate (S2AL) to yield (R)-2,3-dihydroxy-isovalerate. In the isomerase reaction, S2AL is rearranged via a Mg-dependent methyl migration to produce 3-hydroxy-3-methyl-2-ketobutyrate (HMKB). In the reductase reaction, this 2-ketoacid undergoes a metal-dependent reduction by NADPH to yield (R)-2,3-dihydroxy-isovalerate. The protein is Ketol-acid reductoisomerase (NADP(+)) of Mycobacterium leprae (strain TN).